A 274-amino-acid polypeptide reads, in one-letter code: MTQQLQSIIDAAWEDRANLSSAAAPKEVLDAVEHVISDLNAGRLRVATRESVGQWTTHQWIKKAVLLSFRLTDNQVMKAGDLGFYDKVPTKFAHLDEEAMKASGVRVVPPAVARRGSYLAKGVILMPSYVNIGAYVDEGTMVDTWATVGSCAQIGKHVHLSGGVGIGGVLEPMQAGPTIIEDNCFIGARSEVVEGVIVEENSVISMGVYLGQSTPIYDRATDTVSYGRIPSGSVVISGSLPKNEGKYSLYAAIIVKRVDAQTRAKTSLNDLLRD.

Arg-106 and Asp-143 together coordinate substrate.

Belongs to the transferase hexapeptide repeat family. Homotrimer.

It is found in the cytoplasm. It carries out the reaction (S)-2,3,4,5-tetrahydrodipicolinate + succinyl-CoA + H2O = (S)-2-succinylamino-6-oxoheptanedioate + CoA. It participates in amino-acid biosynthesis; L-lysine biosynthesis via DAP pathway; LL-2,6-diaminopimelate from (S)-tetrahydrodipicolinate (succinylase route): step 1/3. The sequence is that of 2,3,4,5-tetrahydropyridine-2,6-dicarboxylate N-succinyltransferase from Albidiferax ferrireducens (strain ATCC BAA-621 / DSM 15236 / T118) (Rhodoferax ferrireducens).